The chain runs to 959 residues: Glycine dehydrogenase (decarboxylating) (959 aa).

Lys-708 is modified (N6-(pyridoxal phosphate)lysine).

Belongs to the GcvP family. As to quaternary structure, the glycine cleavage system is composed of four proteins: P, T, L and H. The cofactor is pyridoxal 5'-phosphate.

It catalyses the reaction N(6)-[(R)-lipoyl]-L-lysyl-[glycine-cleavage complex H protein] + glycine + H(+) = N(6)-[(R)-S(8)-aminomethyldihydrolipoyl]-L-lysyl-[glycine-cleavage complex H protein] + CO2. Its function is as follows. The glycine cleavage system catalyzes the degradation of glycine. The P protein binds the alpha-amino group of glycine through its pyridoxal phosphate cofactor; CO(2) is released and the remaining methylamine moiety is then transferred to the lipoamide cofactor of the H protein. The sequence is that of Glycine dehydrogenase (decarboxylating) from Serratia proteamaculans (strain 568).